A 916-amino-acid polypeptide reads, in one-letter code: Isoleucine--tRNA ligase (916 aa).

The 'HIGH' region motif lies at 57–67 (PYANGNLHMGH). E554 serves as a coordination point for L-isoleucyl-5'-AMP. The short motif at 595–599 (KMSKS) is the 'KMSKS' region element. K598 is an ATP binding site. C885, C888, C905, and C908 together coordinate Zn(2+).

The protein belongs to the class-I aminoacyl-tRNA synthetase family. IleS type 1 subfamily. Monomer. The cofactor is Zn(2+).

Its subcellular location is the cytoplasm. The enzyme catalyses tRNA(Ile) + L-isoleucine + ATP = L-isoleucyl-tRNA(Ile) + AMP + diphosphate. Functionally, catalyzes the attachment of isoleucine to tRNA(Ile). As IleRS can inadvertently accommodate and process structurally similar amino acids such as valine, to avoid such errors it has two additional distinct tRNA(Ile)-dependent editing activities. One activity is designated as 'pretransfer' editing and involves the hydrolysis of activated Val-AMP. The other activity is designated 'posttransfer' editing and involves deacylation of mischarged Val-tRNA(Ile). This chain is Isoleucine--tRNA ligase, found in Staphylococcus saprophyticus subsp. saprophyticus (strain ATCC 15305 / DSM 20229 / NCIMB 8711 / NCTC 7292 / S-41).